Here is a 562-residue protein sequence, read N- to C-terminus: Glutamate--tRNA ligase (562 aa).

A 'HIGH' region motif is present at residues 90–100; sequence PNPSGLLHIGH.

Belongs to the class-I aminoacyl-tRNA synthetase family. Glutamate--tRNA ligase type 2 subfamily.

The protein resides in the cytoplasm. It catalyses the reaction tRNA(Glu) + L-glutamate + ATP = L-glutamyl-tRNA(Glu) + AMP + diphosphate. Catalyzes the attachment of glutamate to tRNA(Glu) in a two-step reaction: glutamate is first activated by ATP to form Glu-AMP and then transferred to the acceptor end of tRNA(Glu). The chain is Glutamate--tRNA ligase from Nanoarchaeum equitans (strain Kin4-M).